The primary structure comprises 399 residues: Insertion element IS116 uncharacterized 44.8 kDa protein (399 aa).

The protein belongs to the transposase IS1111A/IS1328/IS1533 family.

In Streptomyces clavuligerus, this protein is Insertion element IS116 uncharacterized 44.8 kDa protein.